Here is a 1091-residue protein sequence, read N- to C-terminus: Methionine S-methyltransferase (1091 aa).

The protein belongs to the class I-like SAM-binding methyltransferase superfamily. Homotetramer.

The protein resides in the cytoplasm. It carries out the reaction L-methionine + S-adenosyl-L-methionine = S-methyl-L-methionine + S-adenosyl-L-homocysteine. In terms of biological role, catalyzes the S-methylmethionine (SMM) biosynthesis from adenosyl-L-homocysteine (AdoMet) and methionine. SMM biosynthesis (by MMT1) and degradation (by HMT-1, HMT-2 and HMT-3) constitute the SMM cycle in plants, which is probably required to achieve short term control of AdoMet level. Also able to catalyze the selenium-methylmethionine (SeMM) from AdoMet and selenium-methionine (SeMet). May play a role in phoem sulfur transport; such function is however not essential. This chain is Methionine S-methyltransferase (MMT1), found in Zea mays (Maize).